An 84-amino-acid polypeptide reads, in one-letter code: Small ribosomal subunit protein bS20 (84 aa).

Residues 62–72 (KNKARRLKSRA) show a composition bias toward basic residues. A disordered region spans residues 62–84 (KNKARRLKSRAARWSNSATAASR). A compositionally biased stretch (polar residues) spans 75–84 (WSNSATAASR).

The protein belongs to the bacterial ribosomal protein bS20 family.

Binds directly to 16S ribosomal RNA. This is Small ribosomal subunit protein bS20 from Mycoplasmoides gallisepticum (strain R(low / passage 15 / clone 2)) (Mycoplasma gallisepticum).